A 187-amino-acid chain; its full sequence is Elongation factor P (187 aa).

The protein belongs to the elongation factor P family.

The protein localises to the cytoplasm. The protein operates within protein biosynthesis; polypeptide chain elongation. In terms of biological role, involved in peptide bond synthesis. Stimulates efficient translation and peptide-bond synthesis on native or reconstituted 70S ribosomes in vitro. Probably functions indirectly by altering the affinity of the ribosome for aminoacyl-tRNA, thus increasing their reactivity as acceptors for peptidyl transferase. The sequence is that of Elongation factor P (efp) from Treponema pallidum (strain Nichols).